Reading from the N-terminus, the 280-residue chain is F420-dependent methylenetetrahydromethanopterin dehydrogenase (280 aa).

It belongs to the MTD family.

The enzyme catalyses 5,10-methylenetetrahydromethanopterin + oxidized coenzyme F420-(gamma-L-Glu)(n) + 2 H(+) = 5,10-methenyl-5,6,7,8-tetrahydromethanopterin + reduced coenzyme F420-(gamma-L-Glu)(n). It functions in the pathway one-carbon metabolism; methanogenesis from CO(2); 5,10-methylene-5,6,7,8-tetrahydromethanopterin from 5,10-methenyl-5,6,7,8-tetrahydromethanopterin (coenzyme F420 route): step 1/1. Catalyzes the reversible reduction of methenyl-H(4)MPT(+) to methylene-H(4)MPT. The chain is F420-dependent methylenetetrahydromethanopterin dehydrogenase from Methanocorpusculum labreanum (strain ATCC 43576 / DSM 4855 / Z).